An 873-amino-acid chain; its full sequence is Kinase suppressor of Ras 1 (873 aa).

Disordered regions lie at residues 1–24 (MDRA…GAAA), 174–230 (EHKM…PGLS), and 251–281 (LHSF…PSRK). The interval 1–170 (MDRAALRAAA…ALTCLRKVTG (170 aa)) is mediates association with membranes. Positions 206–216 (ASTQGPRSISV) are enriched in polar residues. Phosphothreonine occurs at positions 256 and 260. Position 297 is a phosphoserine; by MARK3 (Ser297). Position 320 is a phosphoserine (Ser320). The Phorbol-ester/DAG-type zinc finger occupies 333-377 (THRFSTKSWLSQVCNVCQKSMIFGVKCKHCRLKCHNKCTKEAPAC). His334 lines the Zn(2+) pocket. Ser337 is subject to Phosphoserine. Residues Cys346, Cys349, Cys359, Cys362, His367, Cys370, and Cys377 each coordinate Zn(2+). A Phosphoserine; by MARK3 modification is found at Ser392. The residue at position 411 (Thr411) is a Phosphothreonine. 2 disordered regions span residues 416–473 (LTKK…RFSF) and 506–544 (HEAE…PISR). Positions 429-458 (SSSNPSSTTSSTPSSPAPFLTSSNPSSATT) are enriched in low complexity. The span at 506–519 (HEAEAEEPEAGKSE) shows a compositional bias: basic and acidic residues. Ser518 is subject to Phosphoserine. Positions 520-530 (AEDDEEDEVDD) are enriched in acidic residues. The Protein kinase domain maps to 563–833 (VELGEPIGQG…MDMLERLPKL (271 aa)). Residue 569 to 577 (IGQGRWGRV) participates in ATP binding. Asp683 serves as the catalytic Proton acceptor. Positions 685 and 700 each coordinate ATP. Ser838 carries the post-translational modification Phosphoserine.

It belongs to the protein kinase superfamily. TKL Ser/Thr protein kinase family. Homodimer. Heterodimerizes (via N-terminus) with BRAF (via N-terminus) in a MAP2K1/MEK1 or MAP2K2/MEK2-dependent manner. Interacts with MAP2K1/MEK1 and MAP2K2/MEK2. Binding to MAP2K1/MEK1 releases the intramolecular inhibitory interaction between KSR1 N-terminus and kinase domains which is required for the subsequent RSK1 dimerization with BRAF. Identified in a complex with AKAP13, MAP2K1 and BRAF. Interacts with AKAP13 and BRAF. Interacts with RAF and MAPK/ERK, in a Ras-dependent manner. Interacts with 14-3-3 proteins including YWHAB. Interacts with HSP90AA1/HSP90, YWHAE/14-3-3 and CDC37. The binding of 14-3-3 proteins to phosphorylated KSR1 prevents the membrane localization. Interacts with MARK3/C-TAK1. Interacts with PPP2R1A and PPP2CA. Interacts with VRK2. In terms of processing, phosphorylated on Ser-297 and, to a higher extent, on Ser-392 by MARK3. Dephosphorylated on Ser-392 by PPP2CA. Phosphorylated KSR1 is cytoplasmic and dephosphorylated KSR1 is membrane-associated. Phosphorylated by PKA at Ser-838. Phosphorylation at Ser-838 is required for cAMP-dependent activation of MAPK1 and/or MAPK3. As to expression, expressed in brain, spleen and testis. Isoform 1 is highly expressed spleen and weakly in testis, and isoform 2 is highly expressed in brain and weakly in testis.

The protein resides in the cytoplasm. It is found in the membrane. Its subcellular location is the cell membrane. It localises to the cell projection. The protein localises to the ruffle membrane. The protein resides in the endoplasmic reticulum membrane. The catalysed reaction is L-seryl-[protein] + ATP = O-phospho-L-seryl-[protein] + ADP + H(+). It catalyses the reaction L-threonyl-[protein] + ATP = O-phospho-L-threonyl-[protein] + ADP + H(+). In terms of biological role, part of a multiprotein signaling complex which promotes phosphorylation of Raf family members and activation of downstream MAP kinases. Independently of its kinase activity, acts as MAP2K1/MEK1 and MAP2K2/MEK2-dependent allosteric activator of BRAF; upon binding to MAP2K1/MEK1 or MAP2K2/MEK2, dimerizes with BRAF and promotes BRAF-mediated phosphorylation of MAP2K1/MEK1 and/or MAP2K2/MEK2. Promotes activation of MAPK1 and/or MAPK3, both in response to EGF and to cAMP. Its kinase activity is unsure. Some protein kinase activity has been detected in vitro, however the physiological relevance of this activity is unknown. In Mus musculus (Mouse), this protein is Kinase suppressor of Ras 1 (Ksr1).